Reading from the N-terminus, the 339-residue chain is Serpentine receptor class alpha-21 (339 aa).

Helical transmembrane passes span 30–50 (FNFLFITTVILLSYCFTWLAI), 150–170 (FIAVSLLVLQLLLTLVSFYIA), 199–219 (VRTVVMVCCLVVTGFIYYLSV), 250–270 (ILIVLKLFCNMLSSIGINLLL), and 282–302 (VLVALFLPGVTYANLCLPLVI).

Belongs to the nematode receptor-like protein sra family.

Its subcellular location is the membrane. The polypeptide is Serpentine receptor class alpha-21 (sra-21) (Caenorhabditis elegans).